We begin with the raw amino-acid sequence, 354 residues long: UDP-N-acetylglucosamine--N-acetylmuramyl-(pentapeptide) pyrophosphoryl-undecaprenol N-acetylglucosamine transferase (354 aa).

Residues 12 to 14 (TGG), Asn-124, Arg-163, Ser-187, Ile-240, and Gln-285 contribute to the UDP-N-acetyl-alpha-D-glucosamine site.

The protein belongs to the glycosyltransferase 28 family. MurG subfamily.

The protein resides in the cell inner membrane. It catalyses the reaction di-trans,octa-cis-undecaprenyl diphospho-N-acetyl-alpha-D-muramoyl-L-alanyl-D-glutamyl-meso-2,6-diaminopimeloyl-D-alanyl-D-alanine + UDP-N-acetyl-alpha-D-glucosamine = di-trans,octa-cis-undecaprenyl diphospho-[N-acetyl-alpha-D-glucosaminyl-(1-&gt;4)]-N-acetyl-alpha-D-muramoyl-L-alanyl-D-glutamyl-meso-2,6-diaminopimeloyl-D-alanyl-D-alanine + UDP + H(+). The protein operates within cell wall biogenesis; peptidoglycan biosynthesis. Cell wall formation. Catalyzes the transfer of a GlcNAc subunit on undecaprenyl-pyrophosphoryl-MurNAc-pentapeptide (lipid intermediate I) to form undecaprenyl-pyrophosphoryl-MurNAc-(pentapeptide)GlcNAc (lipid intermediate II). The sequence is that of UDP-N-acetylglucosamine--N-acetylmuramyl-(pentapeptide) pyrophosphoryl-undecaprenol N-acetylglucosamine transferase from Methylococcus capsulatus (strain ATCC 33009 / NCIMB 11132 / Bath).